Reading from the N-terminus, the 401-residue chain is Glycerol-1-phosphate dehydrogenase [NAD(P)+] (401 aa).

NAD(+) is bound by residues Asp-57, Gly-118–Asp-122, and Thr-140–Ser-143. A substrate-binding site is contributed by Asp-145. Ser-149 serves as a coordination point for NAD(+). Asp-192 provides a ligand contact to substrate. Positions 192 and 272 each coordinate Ni(2+). A substrate-binding site is contributed by His-276. Residue His-292 participates in Ni(2+) binding.

The protein belongs to the glycerol-1-phosphate dehydrogenase family. In terms of assembly, homodimer. Ni(2+) serves as cofactor.

It localises to the cytoplasm. It carries out the reaction sn-glycerol 1-phosphate + NAD(+) = dihydroxyacetone phosphate + NADH + H(+). The enzyme catalyses sn-glycerol 1-phosphate + NADP(+) = dihydroxyacetone phosphate + NADPH + H(+). In terms of biological role, catalyzes the NAD(P)H-dependent reduction of dihydroxyacetonephosphate (DHAP or glycerone phosphate) to glycerol 1-phosphate (G1P). The G1P thus generated is probably used for the synthesis of phosphoglycerolipids in Gram-positive bacterial species. This is Glycerol-1-phosphate dehydrogenase [NAD(P)+] from Bacillus licheniformis (strain ATCC 14580 / DSM 13 / JCM 2505 / CCUG 7422 / NBRC 12200 / NCIMB 9375 / NCTC 10341 / NRRL NRS-1264 / Gibson 46).